Consider the following 254-residue polypeptide: MAIANKNIIFVAGLGGIGLDTSREIVKSGPKNLVILDRIDNPAAIAELKAINPKVTITFYPYDVTVSVAESTKLLKVIFDKLKTVDLLINGAGILDDYQIERTIAVNFAGTVNTTTAIMAFWDKRKGGPGGVIANICSVTGFNAIYQVPVYSASKAAALSFTNSLAKLAPITGVTAYSINPGITKTTLVHKFNSWLDVEPRVAELLLEHPTQTTLQCAQNFVKAIEANKNGAIWKLDLGRLDAIEWTKHWDSGI.

An NAD(+)-binding site is contributed by 10 to 33 (FVAGLGGIGLDTSREIVKSGPKNL). Position 138 (Ser138) interacts with substrate. Tyr151 acts as the Proton acceptor in catalysis.

It belongs to the short-chain dehydrogenases/reductases (SDR) family. Homodimer.

The enzyme catalyses a primary alcohol + NAD(+) = an aldehyde + NADH + H(+). It carries out the reaction a secondary alcohol + NAD(+) = a ketone + NADH + H(+). The polypeptide is Alcohol dehydrogenase 2 (Adh2) (Drosophila hydei (Fruit fly)).